The primary structure comprises 331 residues: Ketol-acid reductoisomerase (NADP(+)) (331 aa).

The region spanning 1–181 (MKMYYDADAD…GGTRAGVIET (181 aa)) is the KARI N-terminal Rossmann domain. NADP(+) is bound by residues 24–27 (YGSQ), Arg47, Ser50, and 82–85 (DEKQ). His107 is a catalytic residue. Gly133 contributes to the NADP(+) binding site. The KARI C-terminal knotted domain maps to 182 to 327 (TFREETETDL…KKLRAMMPWL (146 aa)). Positions 190, 194, 226, and 230 each coordinate Mg(2+). Ser251 is a substrate binding site.

The protein belongs to the ketol-acid reductoisomerase family. Mg(2+) is required as a cofactor.

It catalyses the reaction (2R)-2,3-dihydroxy-3-methylbutanoate + NADP(+) = (2S)-2-acetolactate + NADPH + H(+). The enzyme catalyses (2R,3R)-2,3-dihydroxy-3-methylpentanoate + NADP(+) = (S)-2-ethyl-2-hydroxy-3-oxobutanoate + NADPH + H(+). The protein operates within amino-acid biosynthesis; L-isoleucine biosynthesis; L-isoleucine from 2-oxobutanoate: step 2/4. It participates in amino-acid biosynthesis; L-valine biosynthesis; L-valine from pyruvate: step 2/4. Its function is as follows. Involved in the biosynthesis of branched-chain amino acids (BCAA). Catalyzes an alkyl-migration followed by a ketol-acid reduction of (S)-2-acetolactate (S2AL) to yield (R)-2,3-dihydroxy-isovalerate. In the isomerase reaction, S2AL is rearranged via a Mg-dependent methyl migration to produce 3-hydroxy-3-methyl-2-ketobutyrate (HMKB). In the reductase reaction, this 2-ketoacid undergoes a metal-dependent reduction by NADPH to yield (R)-2,3-dihydroxy-isovalerate. The polypeptide is Ketol-acid reductoisomerase (NADP(+)) (Heliobacterium modesticaldum (strain ATCC 51547 / Ice1)).